We begin with the raw amino-acid sequence, 270 residues long: Protein MGF 110-1L (270 aa).

An N-terminal signal peptide occupies residues 1–26 (MLGLQIFTLLSIPTLLYTYEIEPLER). Residues 27 to 117 (TSTPPEKEFG…HERHEADIRK (91 aa)) are Extracellular-facing. One copy of the A repeat lies at 27-146 (TSTPPEKEFG…YIRKRSLQTV (120 aa)). Asn75 carries N-linked (GlcNAc...) asparagine; by host glycosylation. The chain crosses the membrane as a helical span at residues 118–138 (WQKLLTYGFYLAGCILAVNYI). Residues 139–145 (RKRSLQT) are Cytoplasmic-facing. The helical transmembrane segment at 146-166 (VMYLLVFLVISFLLSQLMLYG) threads the bilayer. A B repeat occupies 147–270 (MYLLVFLVIS…DNLMKKQDIM (124 aa)). The Extracellular segment spans residues 167–270 (ELEDKKHKIG…DNLMKKQDIM (104 aa)).

Belongs to the asfivirus MGF 110 family.

Its subcellular location is the membrane. Plays a role in virus cell tropism, and may be required for efficient virus replication in macrophages. This chain is Protein MGF 110-1L, found in African swine fever virus (isolate Pig/Portugal/OURT88/1988) (ASFV).